A 154-amino-acid chain; its full sequence is Transcriptional repressor NrdR (154 aa).

The segment at 3-34 (CPFCGHSNTQVLDTRMSEDGDAVRRRRRCEAC) is a zinc-finger region. In terms of domain architecture, ATP-cone spans 49-139 (PAIVKKNGSR…VYRSFEDVAE (91 aa)).

The protein belongs to the NrdR family. Zn(2+) serves as cofactor.

Negatively regulates transcription of bacterial ribonucleotide reductase nrd genes and operons by binding to NrdR-boxes. This Cupriavidus pinatubonensis (strain JMP 134 / LMG 1197) (Cupriavidus necator (strain JMP 134)) protein is Transcriptional repressor NrdR.